We begin with the raw amino-acid sequence, 181 residues long: Probable pyruvoyl-dependent arginine decarboxylase (181 aa).

Pyruvic acid (Ser) is present on Ser43.

Belongs to the PdaD family. Pyruvate is required as a cofactor.

The enzyme catalyses L-arginine + H(+) = agmatine + CO2. The polypeptide is Probable pyruvoyl-dependent arginine decarboxylase (Chlorobium phaeovibrioides (strain DSM 265 / 1930) (Prosthecochloris vibrioformis (strain DSM 265))).